A 287-amino-acid chain; its full sequence is MKSRLFIISQYLLPHHLLSRLAGCVAECRARWFKNAFTAWFAKRYQVNMSEALVEDLSAYEHFNAFFTRALKPGARPLDETPGAILCPADGAVSQLGPIEHGRIFQAKGHGYSALELLGGDPALAAPFMGGEFATIYLSPKDYHRVHMPLAGTLREMVYVPGRLFSVNQTTAENVPELFARNERVVCLFDTERGPMAVVLVGAMIVASIETVWAGLVTPPKRELKTFRYDEASRAPIHLEKGAELGRFKLGSTAIVLFGPEQVKWAESLGAGSAVRMGEMLAVPAQA.

Catalysis depends on charge relay system; for autoendoproteolytic cleavage activity residues aspartate 90, histidine 147, and serine 252. The active-site Schiff-base intermediate with substrate; via pyruvic acid; for decarboxylase activity is serine 252. A Pyruvic acid (Ser); by autocatalysis modification is found at serine 252.

It belongs to the phosphatidylserine decarboxylase family. PSD-B subfamily. Prokaryotic type I sub-subfamily. Heterodimer of a large membrane-associated beta subunit and a small pyruvoyl-containing alpha subunit. Pyruvate serves as cofactor. Is synthesized initially as an inactive proenzyme. Formation of the active enzyme involves a self-maturation process in which the active site pyruvoyl group is generated from an internal serine residue via an autocatalytic post-translational modification. Two non-identical subunits are generated from the proenzyme in this reaction, and the pyruvate is formed at the N-terminus of the alpha chain, which is derived from the carboxyl end of the proenzyme. The autoendoproteolytic cleavage occurs by a canonical serine protease mechanism, in which the side chain hydroxyl group of the serine supplies its oxygen atom to form the C-terminus of the beta chain, while the remainder of the serine residue undergoes an oxidative deamination to produce ammonia and the pyruvoyl prosthetic group on the alpha chain. During this reaction, the Ser that is part of the protease active site of the proenzyme becomes the pyruvoyl prosthetic group, which constitutes an essential element of the active site of the mature decarboxylase.

The protein resides in the cell membrane. The catalysed reaction is a 1,2-diacyl-sn-glycero-3-phospho-L-serine + H(+) = a 1,2-diacyl-sn-glycero-3-phosphoethanolamine + CO2. It participates in phospholipid metabolism; phosphatidylethanolamine biosynthesis; phosphatidylethanolamine from CDP-diacylglycerol: step 2/2. In terms of biological role, catalyzes the formation of phosphatidylethanolamine (PtdEtn) from phosphatidylserine (PtdSer). The chain is Phosphatidylserine decarboxylase proenzyme from Pseudomonas entomophila (strain L48).